Reading from the N-terminus, the 364-residue chain is Aminomethyltransferase (364 aa).

Belongs to the GcvT family. In terms of assembly, the glycine cleavage system is composed of four proteins: P, T, L and H.

It catalyses the reaction N(6)-[(R)-S(8)-aminomethyldihydrolipoyl]-L-lysyl-[protein] + (6S)-5,6,7,8-tetrahydrofolate = N(6)-[(R)-dihydrolipoyl]-L-lysyl-[protein] + (6R)-5,10-methylene-5,6,7,8-tetrahydrofolate + NH4(+). Its function is as follows. The glycine cleavage system catalyzes the degradation of glycine. The protein is Aminomethyltransferase of Shewanella denitrificans (strain OS217 / ATCC BAA-1090 / DSM 15013).